A 223-amino-acid chain; its full sequence is N-terminal Xaa-Pro-Lys N-methyltransferase 1-B (223 aa).

S-adenosyl-L-methionine is bound by residues G69, R74, 91–93 (DVT), 119–120 (LQ), and Q135.

This sequence belongs to the methyltransferase superfamily. NTM1 family.

The protein localises to the nucleus. The catalysed reaction is N-terminal L-alanyl-L-prolyl-L-lysyl-[protein] + 3 S-adenosyl-L-methionine = N-terminal N,N,N-trimethyl-L-alanyl-L-prolyl-L-lysyl-[protein] + 3 S-adenosyl-L-homocysteine + 3 H(+). It catalyses the reaction N-terminal L-seryl-L-prolyl-L-lysyl-[protein] + 3 S-adenosyl-L-methionine = N-terminal N,N,N-trimethyl-L-seryl-L-prolyl-L-lysyl-[protein] + 3 S-adenosyl-L-homocysteine + 3 H(+). The enzyme catalyses N-terminal L-prolyl-L-prolyl-L-lysyl-[protein] + 2 S-adenosyl-L-methionine = N-terminal N,N-dimethyl-L-prolyl-L-prolyl-L-lysyl-[protein] + 2 S-adenosyl-L-homocysteine + 2 H(+). Functionally, distributive alpha-N-methyltransferase that methylates the N-terminus of target proteins containing the N-terminal motif [Ala/Gly/Pro/Ser]-Pro-Lys when the initiator Met is cleaved. Specifically catalyzes mono-, di- or tri-methylation of the exposed alpha-amino group of the Ala, Gly or Ser residue in the [Ala/Gly/Ser]-Pro-Lys motif and mono- or di-methylation of Pro in the Pro-Pro-Lys motif. Required during mitosis for normal bipolar spindle formation and chromosome segregation via its action on target proteins. The protein is N-terminal Xaa-Pro-Lys N-methyltransferase 1-B (ntmt1-b) of Xenopus laevis (African clawed frog).